The following is a 356-amino-acid chain: GTPase Obg (356 aa).

Positions 1 to 159 (MKFIDRVKIH…RWLRLELKLL (159 aa)) constitute an Obg domain. Residues 160-331 (ADVGLLGMPN…LVAEVARELE (172 aa)) enclose the OBG-type G domain. Residues 166–173 (GMPNAGKS), 191–195 (FTTLV), 213–216 (DIPG), 283–286 (SKID), and 312–314 (SAV) contribute to the GTP site. Residues S173 and T193 each contribute to the Mg(2+) site.

Belongs to the TRAFAC class OBG-HflX-like GTPase superfamily. OBG GTPase family. As to quaternary structure, monomer. Mg(2+) is required as a cofactor.

The protein localises to the cytoplasm. Functionally, an essential GTPase which binds GTP, GDP and possibly (p)ppGpp with moderate affinity, with high nucleotide exchange rates and a fairly low GTP hydrolysis rate. Plays a role in control of the cell cycle, stress response, ribosome biogenesis and in those bacteria that undergo differentiation, in morphogenesis control. This is GTPase Obg from Syntrophotalea carbinolica (strain DSM 2380 / NBRC 103641 / GraBd1) (Pelobacter carbinolicus).